We begin with the raw amino-acid sequence, 277 residues long: Large ribosomal subunit protein uL2 (277 aa).

Residues 199-277 (DHMNTSVGKA…ILISRHKRKK (79 aa)) form a disordered region. Residues 209-220 (GRTRWMGRRPHN) show a composition bias toward basic residues.

Belongs to the universal ribosomal protein uL2 family. Part of the 50S ribosomal subunit. Forms a bridge to the 30S subunit in the 70S ribosome.

In terms of biological role, one of the primary rRNA binding proteins. Required for association of the 30S and 50S subunits to form the 70S ribosome, for tRNA binding and peptide bond formation. It has been suggested to have peptidyltransferase activity; this is somewhat controversial. Makes several contacts with the 16S rRNA in the 70S ribosome. The sequence is that of Large ribosomal subunit protein uL2 from Nitrobacter winogradskyi (strain ATCC 25391 / DSM 10237 / CIP 104748 / NCIMB 11846 / Nb-255).